The primary structure comprises 473 residues: Photosystem II CP43 reaction center protein (473 aa).

The propeptide occupies 1–14 (MKILYSQRRFYPVE). T15 is modified (N-acetylthreonine). At T15 the chain carries Phosphothreonine. The next 5 helical transmembrane spans lie at 69–93 (LFEV…PHLA), 134–155 (LIGP…KDKN), 178–200 (KALY…RKIT), 255–275 (KPFA…LSYS), and 291–312 (WFNN…ASQA). E367 is a binding site for [CaMn4O5] cluster. The helical transmembrane segment at 447-471 (RARAAAAGFEKGIDRDFEPVLSMTP) threads the bilayer.

Belongs to the PsbB/PsbC family. PsbC subfamily. In terms of assembly, PSII is composed of 1 copy each of membrane proteins PsbA, PsbB, PsbC, PsbD, PsbE, PsbF, PsbH, PsbI, PsbJ, PsbK, PsbL, PsbM, PsbT, PsbX, PsbY, PsbZ, Psb30/Ycf12, at least 3 peripheral proteins of the oxygen-evolving complex and a large number of cofactors. It forms dimeric complexes. Binds multiple chlorophylls and provides some of the ligands for the Ca-4Mn-5O cluster of the oxygen-evolving complex. It may also provide a ligand for a Cl- that is required for oxygen evolution. PSII binds additional chlorophylls, carotenoids and specific lipids. serves as cofactor. In terms of processing, phosphorylated on threonine residue(s).

It localises to the plastid. It is found in the chloroplast thylakoid membrane. One of the components of the core complex of photosystem II (PSII). It binds chlorophyll and helps catalyze the primary light-induced photochemical processes of PSII. PSII is a light-driven water:plastoquinone oxidoreductase, using light energy to abstract electrons from H(2)O, generating O(2) and a proton gradient subsequently used for ATP formation. The sequence is that of Photosystem II CP43 reaction center protein from Marchantia polymorpha (Common liverwort).